Here is a 479-residue protein sequence, read N- to C-terminus: Pup--protein ligase (479 aa).

Glu17 lines the Mg(2+) pocket. Arg62 is a binding site for ATP. Tyr64 contacts Mg(2+). Asp66 (proton acceptor) is an active-site residue. Residue Glu72 participates in Mg(2+) binding. ATP contacts are provided by Ser75 and Trp432.

The protein belongs to the Pup ligase/Pup deamidase family. Pup-conjugating enzyme subfamily.

The enzyme catalyses ATP + [prokaryotic ubiquitin-like protein]-L-glutamate + [protein]-L-lysine = ADP + phosphate + N(6)-([prokaryotic ubiquitin-like protein]-gamma-L-glutamyl)-[protein]-L-lysine.. It functions in the pathway protein degradation; proteasomal Pup-dependent pathway. Its pathway is protein modification; protein pupylation. Its function is as follows. Catalyzes the covalent attachment of the prokaryotic ubiquitin-like protein modifier Pup to the proteasomal substrate proteins, thereby targeting them for proteasomal degradation. This tagging system is termed pupylation. The ligation reaction involves the side-chain carboxylate of the C-terminal glutamate of Pup and the side-chain amino group of a substrate lysine. The protein is Pup--protein ligase of Corynebacterium diphtheriae (strain ATCC 700971 / NCTC 13129 / Biotype gravis).